Here is a 528-residue protein sequence, read N- to C-terminus: Importin subunit alpha-7 (528 aa).

The IBB domain occupies Met-1–Ser-56. 8 ARM repeats span residues Asn-93 to Ser-133, Ser-136 to Gly-175, Pro-178 to Arg-218, Lys-220 to Asp-259, Asn-262 to Thr-301, Asp-304 to Ala-344, Gln-347 to Ala-386, and Tyr-390 to Lys-429.

It belongs to the importin alpha family. As to quaternary structure, forms a complex with importin subunit beta-1.

It is found in the nucleus envelope. In terms of biological role, binds to conventional NLS motifs and mediates nuclear protein import across the nuclear envelope. Acts as a cellular receptor for the nuclear import of the virD2 protein of Agrobacterium, but is not essential for Agrobacterium-mediated root transformation. This chain is Importin subunit alpha-7, found in Arabidopsis thaliana (Mouse-ear cress).